The following is a 93-amino-acid chain: Small ribosomal subunit protein uS19 (93 aa).

This sequence belongs to the universal ribosomal protein uS19 family.

Protein S19 forms a complex with S13 that binds strongly to the 16S ribosomal RNA. This Ehrlichia canis (strain Jake) protein is Small ribosomal subunit protein uS19.